We begin with the raw amino-acid sequence, 94 residues long: Copper resistance protein K (94 aa).

The signal sequence occupies residues 1–20; the sequence is MKQKLMVGAFIAAVSLSAAA.

Monomer in the copper-bound form. Homodimer as apoprotein. Dissociates into monomers upon copper binding.

It is found in the periplasm. Involved in resistance to copper. Can bind up to 2 copper ions. Has higher affinity for Cu(+) than for Cu(2+). This is Copper resistance protein K (copK) from Cupriavidus metallidurans (strain ATCC 43123 / DSM 2839 / NBRC 102507 / CH34) (Ralstonia metallidurans).